The sequence spans 389 residues: Type 2 DNA topoisomerase 6 subunit A (389 aa).

In terms of domain architecture, Topo IIA-type catalytic spans 13-161 (KARLRAAEVM…MLILSKEKGK (149 aa)). The O-(5'-phospho-DNA)-tyrosine intermediate role is filled by tyrosine 107. Mg(2+) contacts are provided by glutamate 208 and aspartate 260.

The protein belongs to the TOP6A family. As to quaternary structure, homodimer. Heterotetramer of two Top6A and two Top6B chains. The cofactor is Mg(2+).

It catalyses the reaction ATP-dependent breakage, passage and rejoining of double-stranded DNA.. Relaxes both positive and negative superturns and exhibits a strong decatenase activity. This is Type 2 DNA topoisomerase 6 subunit A from Aeropyrum pernix (strain ATCC 700893 / DSM 11879 / JCM 9820 / NBRC 100138 / K1).